Consider the following 176-residue polypeptide: dCTP deaminase (176 aa).

DCTP contacts are provided by residues 99-104 (RSTLAR) and Asp115. The active-site Proton donor/acceptor is Glu125. DCTP is bound at residue Gln163.

Belongs to the dCTP deaminase family. Homotrimer.

It carries out the reaction dCTP + H2O + H(+) = dUTP + NH4(+). It functions in the pathway pyrimidine metabolism; dUMP biosynthesis; dUMP from dCTP (dUTP route): step 1/2. Its function is as follows. Catalyzes the deamination of dCTP to dUTP. The protein is dCTP deaminase of Pyrobaculum neutrophilum (strain DSM 2338 / JCM 9278 / NBRC 100436 / V24Sta) (Thermoproteus neutrophilus).